The following is a 1441-amino-acid chain: MEIAGYRGGSLRGSLQGSLRRSVSAWRSPSTSDVFGRSSREEDDEEALKWAALEKLPTYDRLRKGIMTGDGGEIQEVDIQGLGFQERKNLLEKLVRNAEEDNERFLLKLRNRMERVGIDNPTIEVRFEHLNINAEAFVGNRGVPTLVNFFVNKAIWILSALHLMPSGKRPISILHDVSGIIKPCRMTLLLGPPGAGKTTLLLALAGKLDNTLKVTGNVTYNGHGMHEFVPQRTSAYISQHDVHIGEMTVRETLAFSSRCQGVGTRYEMLTELSRREKEANIKPDPDVDVYMKAVAVEGQESVVTDYILKILGLDICADTMVGDGMIRGISGGQKKRVTTGEMLVGPSKALFMDEISTGLDSSTTFQIVNSLRQSVHILGGTALIALLQPAPETYDLFDDILLLSDGQIVYQGPRENVLEFFESMGFKCPERKGVADFLQEVTSRKDQQQYWVRENEPYRFVPVNEFSEAFKSFHVGAKLHEELSTPFDRSRNHPAALTTSKYGISKMELLKACIDREWLLMKRNSFVYIFKVVQLIVLALIAMTVFFRTKLPRNGLEDATIFFGAMFLGLVTHLFNGFAELAMSIAKLPVFYKQRDLLFYPPWAYALPTWILKIPISFVECGVWIAMTYYVIGFDPNVVRMFRHYLLLVLISQVASGLFRLLAAVGRDMVVADTFGAFAQLVLLVLGGFIIAREKIKKFWIWGYWSSPLMYAQNAIAVNEFLGHSWNKLVDATGQTLGERFLRNRGIFVDKNWYWIGVGALIGYMVLFNFLFILFLEWLDPLGKGQTTVSEEALQEKEANRTGANVELATRGSAATSDGGSVEIRKDGNRKKGMVLPFTPLSITFDNVKYSVDMPQEMKDRGVTEDKLLLLKGVSGAFRPGVLTALMGVSGRGKTTLMDVLAGRKTGGYIEGDIRISGYPKNQETFARISGYCEQNDIHSPHVTVYESLLYSAWLRLPAEVDEKQRKMFVDEVMDLVELNSLRGSLVGLPGVTGLSTEQRKRLTIAVELVANPSIIFMDEPTSGLDARAAAIVMRAVRNTVDTGRTVVCTIHQPSIDIFEAFDELFLMKRGGEEIYVGPLGRQSSHLIKYFESIDGVKKIKERYNPATWMLEVTTISQEEILGLNFAEVYRNSDLYKRNKDLIKELSTPPPGSKDLFFATQFSQSFVMQCLACLWKQHKSYWRNPSYTATRLFFTVVIALIFGTIFWDLGKKRSTSLDLINAMGSMYAAVLFIGIQNAQTVQPIVDVERTVFYREKAAGMYSALPYAYAQVLIEVPHILVQTLLYGLLVYSMIGFDWTAAKFLWYMFFMFFTFLYFTYYGMMAVAMTPNSDIAAIVAAAFYAIWNIFAGFIIPRPRIPIWWRWYYWACPVAWTLYGLVVSQFGEYTDTMSDVDETVKDFLRRFLGFRHDFLPVVGVMVVVFTVLFASIFAFSIKTLNFQRR.

Positions 158–430 constitute an ABC transporter 1 domain; it reads LSALHLMPSG…FESMGFKCPE (273 aa). Residue 191–198 participates in ATP binding; sequence GPPGAGKT. The region spanning 508 to 721 is the ABC transmembrane type-2 1 domain; sequence ELLKACIDRE…AQNAIAVNEF (214 aa). Helical transmembrane passes span 526–546, 559–579, 614–634, 646–666, 671–691, and 756–776; these read FVYI…MTVF, ATIF…NGFA, IPIS…VIGF, LLLV…AAVG, VADT…GFII, and IGVG…ILFL. The ABC transporter 2 domain occupies 843-1095; that stretch reads ITFDNVKYSV…HLIKYFESID (253 aa). 888 to 895 contributes to the ATP binding site; it reads GVSGRGKT. Positions 1168–1382 constitute an ABC transmembrane type-2 2 domain; the sequence is MQCLACLWKQ…TLYGLVVSQF (215 aa). The next 7 membrane-spanning stretches (helical) occupy residues 1187 to 1207, 1215 to 1235, 1275 to 1295, 1302 to 1322, 1332 to 1352, 1363 to 1383, and 1413 to 1433; these read YTAT…TIFW, TSLD…FIGI, VPHI…MIGF, FLWY…YGMM, IAAI…GFII, WYYW…SQFG, and VVGV…AFSI.

This sequence belongs to the ABC transporter superfamily. ABCG family. PDR (TC 3.A.1.205) subfamily. In terms of tissue distribution, ubiquitous.

Its subcellular location is the cell membrane. Its function is as follows. May be a general defense protein. Seems involved in turion (dormant buds) formation. Confers resistance to the diterpenoid antifungal agent sclareol. This Spirodela polyrhiza (Giant duckweed) protein is Pleiotropic drug resistance protein TUR2 (TUR2).